Consider the following 450-residue polypeptide: Solute carrier family 52, riboflavin transporter, member 2 (450 aa).

Helical transmembrane passes span 14–34 (LLVA…WVEL), 47–67 (LPSY…LVTL), 86–106 (GLGI…APVA), 112–132 (VAFL…NVTF), and 147–167 (FFLG…GQGV). The N-linked (GlcNAc...) asparagine glycan is linked to Asn-178. A helical membrane pass occupies residues 201–221 (FFWVLTALLGTSAAAFQGLLL). The span at 227–236 (TSEPTTGTGL) shows a compositional bias: low complexity. A disordered region spans residues 227–264 (TSEPTTGTGLRVETPGTEEEEEEEEASPLQEPPGQVAG). Positions 242 to 252 (GTEEEEEEEEA) are enriched in acidic residues. A run of 5 helical transmembrane segments spans residues 282 to 302 (ACLL…LPAV), 317 to 337 (LAVV…MAVL), 344 to 364 (LCGL…LAAL), 369 to 389 (PLVG…LCAG), and 409 to 429 (ALLA…VAMF).

Belongs to the riboflavin transporter family.

Its subcellular location is the cell membrane. The enzyme catalyses riboflavin(in) = riboflavin(out). Its activity is regulated as follows. Riboflavin transport is Na(+)-independent but moderately pH-sensitive. Activity is strongly inhibited by riboflavin analogs, such as lumiflavin. Weakly inhibited by flavin adenine dinucleotide (FAD) and flavin mononucleotide (FMN). Functionally, plasma membrane transporter mediating the uptake by cells of the water soluble vitamin B2/riboflavin that plays a key role in biochemical oxidation-reduction reactions of the carbohydrate, lipid, and amino acid metabolism. May also act as a receptor for 4-hydroxybutyrate. The protein is Solute carrier family 52, riboflavin transporter, member 2 (Slc52a2) of Mus musculus (Mouse).